A 365-amino-acid chain; its full sequence is Inositol 4-methyltransferase (365 aa).

Aspartate 232 provides a ligand contact to S-adenosyl-L-methionine. Catalysis depends on histidine 270, which acts as the Proton acceptor.

This sequence belongs to the class I-like SAM-binding methyltransferase superfamily. Cation-independent O-methyltransferase family. Leaves and roots. The levels found in the leaves are 25 times greater than in the roots.

The catalysed reaction is myo-inositol + S-adenosyl-L-methionine = 1D-4-O-methyl-myo-inositol + S-adenosyl-L-homocysteine + H(+). It participates in polyol metabolism; myo-inositol metabolism. Functionally, catalyzes the methylation of myo-inositol into ononitol (1D-4-O-methyl myo-inositol), the first step in the biosynthesis of the cyclic sugar pinitol which has osmoprotective properties. This Mesembryanthemum crystallinum (Common ice plant) protein is Inositol 4-methyltransferase (IMT1).